Consider the following 297-residue polypeptide: Light-independent protochlorophyllide reductase iron-sulfur ATP-binding protein (297 aa).

ATP is bound by residues 41 to 46 (GIGKST) and lysine 70. Residue serine 45 participates in Mg(2+) binding. Residues cysteine 126 and cysteine 160 each coordinate [4Fe-4S] cluster. Residues 211–212 (NR) and 235–237 (PDL) contribute to the ATP site.

The protein belongs to the NifH/BchL/ChlL family. As to quaternary structure, homodimer. Protochlorophyllide reductase is composed of three subunits; BchL, BchN and BchB. Requires [4Fe-4S] cluster as cofactor.

It carries out the reaction chlorophyllide a + oxidized 2[4Fe-4S]-[ferredoxin] + 2 ADP + 2 phosphate = protochlorophyllide a + reduced 2[4Fe-4S]-[ferredoxin] + 2 ATP + 2 H2O. Its pathway is porphyrin-containing compound metabolism; bacteriochlorophyll biosynthesis (light-independent). In terms of biological role, component of the dark-operative protochlorophyllide reductase (DPOR) that uses Mg-ATP and reduced ferredoxin to reduce ring D of protochlorophyllide (Pchlide) to form chlorophyllide a (Chlide). This reaction is light-independent. The L component serves as a unique electron donor to the NB-component of the complex, and binds Mg-ATP. This Methylorubrum extorquens (strain PA1) (Methylobacterium extorquens) protein is Light-independent protochlorophyllide reductase iron-sulfur ATP-binding protein.